The sequence spans 170 residues: Anaphase-promoting complex subunit SWM1 (170 aa).

Composition is skewed to basic and acidic residues over residues 48–67 (NTRTDAEEGRAPQDGERNSN) and 132–141 (GANEPRKETI). Disordered regions lie at residues 48 to 81 (NTRTDAEEGRAPQDGERNSNVRESAQGKALMTSE) and 122 to 141 (LNGGTNSRNDGANEPRKETI).

It belongs to the APC13 family. The APC/C is composed of at least 13 subunits that stay tightly associated throughout the cell cycle: APC1, APC2, APC4, APC5, APC9, APC11, CDC16, CDC23, CDC26, CDC27, DOC1, MND2 and SWM1. SWM1 interacts directly with CDC23 and APC5, and is required to tether APC9, CDC16, CDC26 and CDC27 to the complex.

Its pathway is protein modification; protein ubiquitination. In terms of biological role, component of the anaphase promoting complex/cyclosome (APC/C), a cell cycle-regulated E3 ubiquitin-protein ligase complex that controls progression through mitosis and the G1 phase of the cell cycle. The APC/C is thought to confer substrate specificity and, in the presence of ubiquitin-conjugating E2 enzymes, it catalyzes the formation of protein-ubiquitin conjugates that are subsequently degraded by the 26S proteasome. In early mitosis, the APC/C is activated by CDC20 and targets securin PDS1, the B-type cyclin CLB5, and other anaphase inhibitory proteins for proteolysis, thereby triggering the separation of sister chromatids at the metaphase-to-anaphase transition. In late mitosis and in G1, degradation of CLB5 allows activation of the APC/C by CDH1, which is needed to destroy CDC20 and the B-type cyclin CLB2 to allow exit from mitosis and creating the low CDK state necessary for cytokinesis and for reforming prereplicative complexes in G1 prior to another round of replication. SWM1 is required for APC/C activity in meiosis. This Saccharomyces cerevisiae (strain ATCC 204508 / S288c) (Baker's yeast) protein is Anaphase-promoting complex subunit SWM1 (SWM1).